Consider the following 164-residue polypeptide: MGFKTKMQNLFLGNTDDLDELEYENDATINKGRGASQQEYDEYYEDSTPTVTQKEDPVRQSNIVPIHTKKAKSQVILSEPRVFNEAQEIGEHLRQNRAVIVNMQRMSKDQSRQMINFLSGVVFALDGTITTISQNTLLCVPNNVELAGSISNLLGEDDINHKGW.

The disordered stretch occupies residues 29–57 (INKGRGASQQEYDEYYEDSTPTVTQKEDP).

This sequence belongs to the SepF family. As to quaternary structure, homodimer. Interacts with FtsZ.

The protein localises to the cytoplasm. Cell division protein that is part of the divisome complex and is recruited early to the Z-ring. Probably stimulates Z-ring formation, perhaps through the cross-linking of FtsZ protofilaments. Its function overlaps with FtsA. The protein is Cell division protein SepF of Exiguobacterium sibiricum (strain DSM 17290 / CCUG 55495 / CIP 109462 / JCM 13490 / 255-15).